Consider the following 1196-residue polypeptide: DNA-directed RNA polymerase subunit beta (1196 aa).

It belongs to the RNA polymerase beta chain family. The RNAP catalytic core consists of 2 alpha, 1 beta, 1 beta' and 1 omega subunit. When a sigma factor is associated with the core the holoenzyme is formed, which can initiate transcription.

The enzyme catalyses RNA(n) + a ribonucleoside 5'-triphosphate = RNA(n+1) + diphosphate. Functionally, DNA-dependent RNA polymerase catalyzes the transcription of DNA into RNA using the four ribonucleoside triphosphates as substrates. This chain is DNA-directed RNA polymerase subunit beta, found in Lactococcus lactis subsp. cremoris (strain MG1363).